The primary structure comprises 734 residues: Photosystem I P700 chlorophyll a apoprotein A2 (734 aa).

The next 8 membrane-spanning stretches (helical) occupy residues 46 to 69 (IFASHFGQLAIIFLWTSGNLFHVA), 135 to 158 (LYIGALFLLITASMTLFAGWLHLQ), 175 to 199 (LNHHLSGLFGVSSLAWTGHLIHVAI), 273 to 291 (IAHHHLAIAVLFIVAGHMY), 330 to 353 (LHFQLGLALASLGVITSVVAQHMY), 369 to 395 (AALYTHHQYIAGFIMTGAFAHGAIFFI), 417 to 439 (AIISHLSWASLFLGFHTLGLYVH), and 517 to 535 (FLVHHAIALGLHTTTLILV). [4Fe-4S] cluster contacts are provided by Cys-559 and Cys-568. 2 consecutive transmembrane segments (helical) span residues 575-596 (AFYLAVFWMLNTIGWVTFYWHW) and 643-665 (LSVWAWMFLFGHLIWATGFMFLI). His-654, Met-662, and Tyr-670 together coordinate chlorophyll a. Trp-671 contributes to the phylloquinone binding site. A helical transmembrane segment spans residues 707–727 (VVGLAHFSVGYVFTYAAFLIA).

It belongs to the PsaA/PsaB family. In terms of assembly, the PsaA/B heterodimer binds the P700 chlorophyll special pair and subsequent electron acceptors. PSI consists of a core antenna complex that captures photons, and an electron transfer chain that converts photonic excitation into a charge separation. The eukaryotic PSI reaction center is composed of at least 11 subunits. P700 is a chlorophyll a/chlorophyll a' dimer, A0 is one or more chlorophyll a, A1 is one or both phylloquinones and FX is a shared 4Fe-4S iron-sulfur center. serves as cofactor.

The protein resides in the plastid. The protein localises to the chloroplast thylakoid membrane. It carries out the reaction reduced [plastocyanin] + hnu + oxidized [2Fe-2S]-[ferredoxin] = oxidized [plastocyanin] + reduced [2Fe-2S]-[ferredoxin]. PsaA and PsaB bind P700, the primary electron donor of photosystem I (PSI), as well as the electron acceptors A0, A1 and FX. PSI is a plastocyanin-ferredoxin oxidoreductase, converting photonic excitation into a charge separation, which transfers an electron from the donor P700 chlorophyll pair to the spectroscopically characterized acceptors A0, A1, FX, FA and FB in turn. Oxidized P700 is reduced on the lumenal side of the thylakoid membrane by plastocyanin. The chain is Photosystem I P700 chlorophyll a apoprotein A2 from Mesostigma viride (Green alga).